A 132-amino-acid polypeptide reads, in one-letter code: Small ribosomal subunit protein uS8c (132 aa).

The protein belongs to the universal ribosomal protein uS8 family. Part of the 30S ribosomal subunit.

Its subcellular location is the plastid. It is found in the chloroplast. Its function is as follows. One of the primary rRNA binding proteins, it binds directly to 16S rRNA central domain where it helps coordinate assembly of the platform of the 30S subunit. This is Small ribosomal subunit protein uS8c (rps8) from Illicium oligandrum (Star anise).